We begin with the raw amino-acid sequence, 845 residues long: Protein P (845 aa).

The segment at 1-179 is terminal protein domain (TP); the sequence is MPLSYQHFRK…FCGSPYSWEQ (179 aa). The spacer stretch occupies residues 180–348; the sequence is ELHHGRSVTK…YCLSHLVNLL (169 aa). 3 disordered regions span residues 186–205, 222–245, and 288–318; these read SVTK…QPSG, QPRL…SGSI, and YSHL…RSQS. A compositionally biased stretch (polar residues) spans 289–301; the sequence is SHLSTSKRQSSSG. Residues 349-692 form a polymerase/reverse transcriptase domain (RT) region; the sequence is EDWGPCADHG…YMNLYPVARQ (344 aa). The region spanning 359–602 is the Reverse transcriptase domain; the sequence is EHHIRIPRTP…YSLNFMGYII (244 aa). 3 residues coordinate Mg(2+): Asp-431, Asp-553, and Asp-554.

Belongs to the hepadnaviridae P protein family.

The catalysed reaction is DNA(n) + a 2'-deoxyribonucleoside 5'-triphosphate = DNA(n+1) + diphosphate. It carries out the reaction Endonucleolytic cleavage to 5'-phosphomonoester.. Its activity is regulated as follows. Activated by host HSP70 and HSP40 in vitro to be able to bind the epsilon loop of the pgRNA. Because deletion of the RNase H region renders the protein partly chaperone-independent, the chaperones may be needed indirectly to relieve occlusion of the RNA-binding site by this domain. Inhibited by several reverse-transcriptase inhibitors: Lamivudine, Adefovir and Entecavir. Its function is as follows. Multifunctional enzyme that converts the viral RNA genome into dsDNA in viral cytoplasmic capsids. This enzyme displays a DNA polymerase activity that can copy either DNA or RNA templates, and a ribonuclease H (RNase H) activity that cleaves the RNA strand of RNA-DNA heteroduplexes in a partially processive 3'- to 5'-endonucleasic mode. Neo-synthesized pregenomic RNA (pgRNA) are encapsidated together with the P protein, and reverse-transcribed inside the nucleocapsid. Initiation of reverse-transcription occurs first by binding the epsilon loop on the pgRNA genome, and is initiated by protein priming, thereby the 5'-end of (-)DNA is covalently linked to P protein. Partial (+)DNA is synthesized from the (-)DNA template and generates the relaxed circular DNA (RC-DNA) genome. After budding and infection, the RC-DNA migrates in the nucleus, and is converted into a plasmid-like covalently closed circular DNA (cccDNA). The activity of P protein does not seem to be necessary for cccDNA generation, and is presumably released from (+)DNA by host nuclear DNA repair machinery. The polypeptide is Protein P (Hepatitis B virus genotype A3 (isolate Cameroon/CMR711/1994) (HBV-A)).